A 173-amino-acid chain; its full sequence is Shikimate kinase (173 aa).

Position 14 to 19 (14 to 19 (GAGKST)) interacts with ATP. Ser18 is a Mg(2+) binding site. Asp36, Arg60, and Gly82 together coordinate substrate. ATP is bound at residue Lys120. Residue Arg140 coordinates substrate.

This sequence belongs to the shikimate kinase family. Monomer. Mg(2+) is required as a cofactor.

It is found in the cytoplasm. It carries out the reaction shikimate + ATP = 3-phosphoshikimate + ADP + H(+). It participates in metabolic intermediate biosynthesis; chorismate biosynthesis; chorismate from D-erythrose 4-phosphate and phosphoenolpyruvate: step 5/7. Its function is as follows. Catalyzes the specific phosphorylation of the 3-hydroxyl group of shikimic acid using ATP as a cosubstrate. This chain is Shikimate kinase (aroK), found in Wigglesworthia glossinidia brevipalpis.